The primary structure comprises 94 residues: Integration host factor subunit beta (94 aa).

Belongs to the bacterial histone-like protein family. In terms of assembly, heterodimer of an alpha and a beta chain.

Functionally, this protein is one of the two subunits of integration host factor, a specific DNA-binding protein that functions in genetic recombination as well as in transcriptional and translational control. The chain is Integration host factor subunit beta from Actinobacillus succinogenes (strain ATCC 55618 / DSM 22257 / CCUG 43843 / 130Z).